The sequence spans 298 residues: 1,2-dihydroxynaphthalene dioxygenase (298 aa).

VOC domains follow at residues 6–121 (ELGY…IFYG) and 146–267 (GIGH…FGWG). His-149 provides a ligand contact to Fe cation. Substrate is bound by residues His-149, 196–197 (QH), His-212, and Tyr-253. Fe cation is bound at residue His-212. Fe cation is bound at residue Glu-263.

The protein belongs to the extradiol ring-cleavage dioxygenase family. In terms of assembly, homooctamer. Fe(2+) is required as a cofactor.

The catalysed reaction is naphthalene-1,2-diol + O2 = 2-hydroxychromene-2-carboxylate + H(+). Its pathway is aromatic compound metabolism; naphthalene degradation. Functionally, involved in the naphthalene and naphthalenesulfonate catabolic pathway. Catalyzes the meta-cleavage of 1,2-dihydroxynaphthalene (1,2-DHN) to yield 2-hydroxychromene-2-carboxylic acid. Can also cleave 1,2,5-trihydroxynaphthalene (1,2,5-THN), 1,2,6-trihydroxynaphthalene (1,2,6-THN), 1,2,7-trihydroxynaphthalene (1,2,7-THN), 2,3-dihydroxybiphenyl, 3,4-dihydroxybiphenyl, catechol, 3-methylcatechol and 4-methylcatechol. The polypeptide is 1,2-dihydroxynaphthalene dioxygenase (nsaC) (Sphingobium xenophagum).